We begin with the raw amino-acid sequence, 541 residues long: Chaperonin GroEL (541 aa).

Residues 30–33, lysine 51, 87–91, glycine 415, and aspartate 495 each bind ATP; these read TLGP and DGTTT.

The protein belongs to the chaperonin (HSP60) family. In terms of assembly, forms a cylinder of 14 subunits composed of two heptameric rings stacked back-to-back. Interacts with the co-chaperonin GroES.

The protein localises to the cytoplasm. It catalyses the reaction ATP + H2O + a folded polypeptide = ADP + phosphate + an unfolded polypeptide.. Its function is as follows. Together with its co-chaperonin GroES, plays an essential role in assisting protein folding. The GroEL-GroES system forms a nano-cage that allows encapsulation of the non-native substrate proteins and provides a physical environment optimized to promote and accelerate protein folding. The polypeptide is Chaperonin GroEL (Pantoea ananas (Erwinia uredovora)).